A 252-amino-acid polypeptide reads, in one-letter code: tRNA (guanine-N(7)-)-methyltransferase (252 aa).

S-adenosyl-L-methionine-binding residues include Glu75, Glu100, Asp127, and Asp150. The active site involves Asp150. Lys154 provides a ligand contact to substrate. Residues 156–161 (RHNKRR) form an interaction with RNA region. Residues Asp186 and 223–226 (THFE) contribute to the substrate site.

This sequence belongs to the class I-like SAM-binding methyltransferase superfamily. TrmB family.

It catalyses the reaction guanosine(46) in tRNA + S-adenosyl-L-methionine = N(7)-methylguanosine(46) in tRNA + S-adenosyl-L-homocysteine. It participates in tRNA modification; N(7)-methylguanine-tRNA biosynthesis. Functionally, catalyzes the formation of N(7)-methylguanine at position 46 (m7G46) in tRNA. The sequence is that of tRNA (guanine-N(7)-)-methyltransferase from Xanthomonas oryzae pv. oryzae (strain MAFF 311018).